The following is a 630-amino-acid chain: Glutamyl-tRNA(Gln) amidotransferase subunit E (630 aa).

Belongs to the GatB/GatE family. GatE subfamily. In terms of assembly, heterodimer of GatD and GatE.

It carries out the reaction L-glutamyl-tRNA(Gln) + L-glutamine + ATP + H2O = L-glutaminyl-tRNA(Gln) + L-glutamate + ADP + phosphate + H(+). In terms of biological role, allows the formation of correctly charged Gln-tRNA(Gln) through the transamidation of misacylated Glu-tRNA(Gln) in organisms which lack glutaminyl-tRNA synthetase. The reaction takes place in the presence of glutamine and ATP through an activated gamma-phospho-Glu-tRNA(Gln). The GatDE system is specific for glutamate and does not act on aspartate. This is Glutamyl-tRNA(Gln) amidotransferase subunit E from Methanocaldococcus jannaschii (strain ATCC 43067 / DSM 2661 / JAL-1 / JCM 10045 / NBRC 100440) (Methanococcus jannaschii).